Consider the following 147-residue polypeptide: SsrA-binding protein (147 aa).

The protein belongs to the SmpB family.

Its subcellular location is the cytoplasm. In terms of biological role, required for rescue of stalled ribosomes mediated by trans-translation. Binds to transfer-messenger RNA (tmRNA), required for stable association of tmRNA with ribosomes. tmRNA and SmpB together mimic tRNA shape, replacing the anticodon stem-loop with SmpB. tmRNA is encoded by the ssrA gene; the 2 termini fold to resemble tRNA(Ala) and it encodes a 'tag peptide', a short internal open reading frame. During trans-translation Ala-aminoacylated tmRNA acts like a tRNA, entering the A-site of stalled ribosomes, displacing the stalled mRNA. The ribosome then switches to translate the ORF on the tmRNA; the nascent peptide is terminated with the 'tag peptide' encoded by the tmRNA and targeted for degradation. The ribosome is freed to recommence translation, which seems to be the essential function of trans-translation. The protein is SsrA-binding protein of Mycoplasmopsis agalactiae (strain NCTC 10123 / CIP 59.7 / PG2) (Mycoplasma agalactiae).